A 304-amino-acid chain; its full sequence is Recombination-associated protein RdgC (304 aa).

This sequence belongs to the RdgC family.

It is found in the cytoplasm. The protein localises to the nucleoid. May be involved in recombination. The polypeptide is Recombination-associated protein RdgC (Paraburkholderia phymatum (strain DSM 17167 / CIP 108236 / LMG 21445 / STM815) (Burkholderia phymatum)).